The primary structure comprises 513 residues: MGAATKLAFAVFLISCSSGAILGRSETQECIYYNANWEKDKTNRSGIEPCYGDKDKRRHCFATWKNISGSIEIVKQGCWLDDINCYDRNDCIEKKDSPEVFFCCCEGNMCNERFFYFPEMEVTQPTSNPVTPKPPLFNTLLYSLVPIMGIAVIVLFSFWMYRHHKLAYPPVLVPTQDPGPPPPSPLMGLKPLQLLEIKARGRFGCVWKAQLLNEYVAVKIFPIQDKQSWQNEYEIYSLPGMKHDNILQFIGAEKRGTSIDVDLWLITAFHEKGSLTDFLKANVVSWNELCHIAQTMARGLAYLHEDIPGLKDGHKPAISHRDIKSKNVLLKNNLTACIADFGLALKFEAGKSAGDTHGQVGTRRYMAPEVLEGAINFQRDAFLRIDMYAMGLVLWELASRCTASDGPVDEYMLPFEEEIGQHPSLEDMQEVVVHKKKRPVLRECWQKHSGMAMLCETIEECWDHDAEARLSAGCVEERIIQMQKLTNIITTEDIVTVVTMVTNVDFPPKESSL.

Residues 1–19 (MGAATKLAFAVFLISCSSG) form the signal peptide. At 20 to 139 (AILGRSETQE…VTPKPPLFNT (120 aa)) the chain is on the extracellular side. Cystine bridges form between cysteine 30/cysteine 60, cysteine 50/cysteine 78, cysteine 85/cysteine 104, cysteine 91/cysteine 103, and cysteine 105/cysteine 110. N-linked (GlcNAc...) asparagine glycans are attached at residues asparagine 43 and asparagine 66. Residues 140–160 (LLYSLVPIMGIAVIVLFSFWM) traverse the membrane as a helical segment. At 161-513 (YRHHKLAYPP…VDFPPKESSL (353 aa)) the chain is on the cytoplasmic side. One can recognise a Protein kinase domain in the interval 192 to 485 (LQLLEIKARG…EERIIQMQKL (294 aa)). ATP-binding positions include 198 to 206 (KARGRFGCV) and lysine 219. The active-site Proton acceptor is aspartate 322.

This sequence belongs to the protein kinase superfamily. TKL Ser/Thr protein kinase family. TGFB receptor subfamily. Requires Mg(2+) as cofactor. Mn(2+) is required as a cofactor. In terms of tissue distribution, expressed in hen anterior pituitary during the ovulatory cycle and in the ovarian follicle.

It is found in the cell membrane. The catalysed reaction is L-threonyl-[receptor-protein] + ATP = O-phospho-L-threonyl-[receptor-protein] + ADP + H(+). It catalyses the reaction L-seryl-[receptor-protein] + ATP = O-phospho-L-seryl-[receptor-protein] + ADP + H(+). Its function is as follows. On ligand binding, forms a receptor complex consisting of two type II and two type I transmembrane serine/threonine kinases. Type II receptors phosphorylate and activate type I receptors which autophosphorylate, then bind and activate SMAD transcriptional regulators. Receptor for activin A, activin B and inhibin A. May modulate neuropeptide expression in dorsal root ganglia (DRG) neurons and ovarian follicle development. In Gallus gallus (Chicken), this protein is Activin receptor type-2A (ACVR2A).